The chain runs to 320 residues: Tetraacyldisaccharide 4'-kinase (320 aa).

53–60 (SVGGNGKT) lines the ATP pocket.

The protein belongs to the LpxK family.

It carries out the reaction a lipid A disaccharide + ATP = a lipid IVA + ADP + H(+). It participates in glycolipid biosynthesis; lipid IV(A) biosynthesis; lipid IV(A) from (3R)-3-hydroxytetradecanoyl-[acyl-carrier-protein] and UDP-N-acetyl-alpha-D-glucosamine: step 6/6. Its function is as follows. Transfers the gamma-phosphate of ATP to the 4'-position of a tetraacyldisaccharide 1-phosphate intermediate (termed DS-1-P) to form tetraacyldisaccharide 1,4'-bis-phosphate (lipid IVA). The polypeptide is Tetraacyldisaccharide 4'-kinase (Psychromonas ingrahamii (strain DSM 17664 / CCUG 51855 / 37)).